The following is a 372-amino-acid chain: Adaptive-response sensory kinase SasA (372 aa).

The region spanning 147 to 360 is the Histidine kinase domain; it reads MVAHELRTPL…CFHFTVPVWQ (214 aa). Residue His150 is modified to Phosphohistidine; by autocatalysis.

As to quaternary structure, homooligomerizes. Interacts with KaiC. Participates in the KaiBC complex, whose core is composed of a KaiC homohexamer and 6 KaiB.

The enzyme catalyses ATP + protein L-histidine = ADP + protein N-phospho-L-histidine.. Functionally, member of the two-component regulatory system SasA/RpaA involved in genome-wide circadian gene expression. One of several clock output pathways. Participates in the Kai clock protein complex, the main circadian regulator in cyanobacteria, via its interaction with KaiC. KaiC enhances the autophosphorylation activity of SasA, which then transfers its phosphate group to RpaA to activate it. In addition to its output function, recruits fold-shifted KaiB (KaiB(fs)) to KaiC to cooperatively form the KaiB(6):KaiC(6) complex (independent of SasA kinase activity). Required for robustness of the circadian rhythm of gene expression and is involved in clock output, also required for adaptation to light/dark cycles. In Prochlorococcus marinus (strain AS9601), this protein is Adaptive-response sensory kinase SasA.